Consider the following 208-residue polypeptide: Large ribosomal subunit protein uL4 (208 aa).

A disordered region spans residues arginine 44–isoleucine 89. Basic residues predominate over residues glycine 60–glycine 71.

This sequence belongs to the universal ribosomal protein uL4 family. In terms of assembly, part of the 50S ribosomal subunit.

Functionally, one of the primary rRNA binding proteins, this protein initially binds near the 5'-end of the 23S rRNA. It is important during the early stages of 50S assembly. It makes multiple contacts with different domains of the 23S rRNA in the assembled 50S subunit and ribosome. In terms of biological role, forms part of the polypeptide exit tunnel. The sequence is that of Large ribosomal subunit protein uL4 from Chlorobium phaeobacteroides (strain BS1).